The following is a 164-amino-acid chain: S-ribosylhomocysteine lyase (164 aa).

Histidine 54, histidine 58, and cysteine 128 together coordinate Fe cation.

The protein belongs to the LuxS family. In terms of assembly, homodimer. Fe cation is required as a cofactor.

The enzyme catalyses S-(5-deoxy-D-ribos-5-yl)-L-homocysteine = (S)-4,5-dihydroxypentane-2,3-dione + L-homocysteine. Involved in the synthesis of autoinducer 2 (AI-2) which is secreted by bacteria and is used to communicate both the cell density and the metabolic potential of the environment. The regulation of gene expression in response to changes in cell density is called quorum sensing. Catalyzes the transformation of S-ribosylhomocysteine (RHC) to homocysteine (HC) and 4,5-dihydroxy-2,3-pentadione (DPD). In Campylobacter jejuni subsp. doylei (strain ATCC BAA-1458 / RM4099 / 269.97), this protein is S-ribosylhomocysteine lyase.